We begin with the raw amino-acid sequence, 158 residues long: Phosphopantetheine adenylyltransferase (158 aa).

Thr10 provides a ligand contact to substrate. ATP is bound by residues 10–11 (TF) and His18. 3 residues coordinate substrate: Lys42, Leu74, and Arg88. ATP is bound by residues 89-91 (GLR), Glu99, and 124-130 (YSFISSS).

The protein belongs to the bacterial CoaD family. In terms of assembly, homohexamer. Mg(2+) serves as cofactor.

It localises to the cytoplasm. The enzyme catalyses (R)-4'-phosphopantetheine + ATP + H(+) = 3'-dephospho-CoA + diphosphate. Its pathway is cofactor biosynthesis; coenzyme A biosynthesis; CoA from (R)-pantothenate: step 4/5. Its function is as follows. Reversibly transfers an adenylyl group from ATP to 4'-phosphopantetheine, yielding dephospho-CoA (dPCoA) and pyrophosphate. The sequence is that of Phosphopantetheine adenylyltransferase from Erwinia tasmaniensis (strain DSM 17950 / CFBP 7177 / CIP 109463 / NCPPB 4357 / Et1/99).